A 131-amino-acid chain; its full sequence is D-ribose pyranase (131 aa).

Histidine 20 acts as the Proton donor in catalysis. Residues aspartate 28, histidine 98, and 120–122 contribute to the substrate site; that span reads YAN.

It belongs to the RbsD / FucU family. RbsD subfamily. In terms of assembly, homodecamer.

It is found in the cytoplasm. The catalysed reaction is beta-D-ribopyranose = beta-D-ribofuranose. It participates in carbohydrate metabolism; D-ribose degradation; D-ribose 5-phosphate from beta-D-ribopyranose: step 1/2. Its function is as follows. Catalyzes the interconversion of beta-pyran and beta-furan forms of D-ribose. The protein is D-ribose pyranase of Bacillus cereus (strain ATCC 10987 / NRS 248).